Consider the following 179-residue polypeptide: M-phase-specific PLK1-interacting protein (179 aa).

The segment at 1–135 (MQRQNFRPPT…RVREKRMSNE (135 aa)) is disordered. Position 37 is an asymmetric dimethylarginine (R37). S40 and S47 each carry phosphoserine. Position 51 is a phosphothreonine (T51). The residue at position 57 (R57) is an Omega-N-methylarginine. 2 positions are modified to asymmetric dimethylarginine: R59 and R68. Residues 60–71 (PYGSSHSPRHGG) show a composition bias toward low complexity. Residue S72 is modified to Phosphoserine. R77 carries the post-translational modification Asymmetric dimethylarginine. Over residues 79-109 (GSPSPGGYPGSYSRSPAGSQQQFGYSPGQQQ) the composition is skewed to low complexity. Phosphoserine is present on residues S80, S82, S93, S104, and S115. Residues 110–122 (THPQGSPRTSTPF) show a composition bias toward polar residues. R117 is subject to Omega-N-methylarginine. T120 carries the post-translational modification Phosphothreonine. Phosphoserine is present on residues S124 and S133.

As to quaternary structure, interacts with PLK1; phosphorylation-dependent. Phosphorylated during mitosis in the cell cycle probably by CDK1. As to expression, expressed at highest levels in liver and kidney; intermediate expression in skeletal muscle, pancreas, heart and placenta; low expression in brain and lung. Expressed in epidermis and hair follicles.

It is found in the nucleus. The protein resides in the cytoplasm. The protein localises to the cytoskeleton. It localises to the microtubule organizing center. Its subcellular location is the centrosome. Its function is as follows. May play a role in maintenance of cell cycle integrity by regulating mitosis or cytokinesis. The sequence is that of M-phase-specific PLK1-interacting protein (MPLKIP) from Homo sapiens (Human).